Here is a 207-residue protein sequence, read N- to C-terminus: Outer-membrane lipoprotein LolB (207 aa).

A signal peptide spans 1 to 21 (MTLPDFRLIRLLPLASLVLTA). Residue Cys-22 is the site of N-palmitoyl cysteine attachment. A lipid anchor (S-diacylglycerol cysteine) is attached at Cys-22.

This sequence belongs to the LolB family. In terms of assembly, monomer.

It is found in the cell outer membrane. In terms of biological role, plays a critical role in the incorporation of lipoproteins in the outer membrane after they are released by the LolA protein. The polypeptide is Outer-membrane lipoprotein LolB (Salmonella typhi).